We begin with the raw amino-acid sequence, 629 residues long: tRNA uridine 5-carboxymethylaminomethyl modification enzyme MnmG (629 aa).

13-18 (GGGHAG) provides a ligand contact to FAD. 273-287 (GPRYCPSIEDKIVRF) contributes to the NAD(+) binding site.

This sequence belongs to the MnmG family. In terms of assembly, homodimer. Heterotetramer of two MnmE and two MnmG subunits. It depends on FAD as a cofactor.

It is found in the cytoplasm. Its function is as follows. NAD-binding protein involved in the addition of a carboxymethylaminomethyl (cmnm) group at the wobble position (U34) of certain tRNAs, forming tRNA-cmnm(5)s(2)U34. This Pseudoalteromonas translucida (strain TAC 125) protein is tRNA uridine 5-carboxymethylaminomethyl modification enzyme MnmG.